Here is a 192-residue protein sequence, read N- to C-terminus: GTP-binding protein RHO2 (192 aa).

14 to 21 (GDGACGKT) contacts GTP. The Effector region motif lies at 36–44 (YHPTVFENY). Residues 61-65 (DTAGQ) and 119-122 (LKKD) each bind GTP. Cys188 carries the S-palmitoyl cysteine lipid modification. The residue at position 189 (Cys189) is a Cysteine methyl ester. Cys189 carries S-geranylgeranyl cysteine lipidation. The propeptide at 190–192 (IIL) is removed in mature form.

This sequence belongs to the small GTPase superfamily. Rho family. Interacts with BEM4.

The protein localises to the cell membrane. It catalyses the reaction GTP + H2O = GDP + phosphate + H(+). The protein is GTP-binding protein RHO2 (RHO2) of Saccharomyces cerevisiae (strain ATCC 204508 / S288c) (Baker's yeast).